Consider the following 278-residue polypeptide: 4-deoxy-L-threo-5-hexosulose-uronate ketol-isomerase (278 aa).

Positions 196, 198, 203, and 245 each coordinate Zn(2+).

The protein belongs to the KduI family. In terms of assembly, homohexamer. Requires Zn(2+) as cofactor.

The enzyme catalyses 5-dehydro-4-deoxy-D-glucuronate = 3-deoxy-D-glycero-2,5-hexodiulosonate. Its pathway is glycan metabolism; pectin degradation; 2-dehydro-3-deoxy-D-gluconate from pectin: step 4/5. Catalyzes the isomerization of 5-dehydro-4-deoxy-D-glucuronate to 3-deoxy-D-glycero-2,5-hexodiulosonate. This chain is 4-deoxy-L-threo-5-hexosulose-uronate ketol-isomerase, found in Escherichia coli O139:H28 (strain E24377A / ETEC).